A 305-amino-acid chain; its full sequence is 17-beta-hydroxysteroid dehydrogenase type 3 (305 aa).

NADP(+) is bound at residue 44–73 (GQWAVITGAGDGIGKAYSFELARHGLNVVL). Residue serine 181 coordinates substrate. Tyrosine 194 serves as the catalytic Proton acceptor.

Belongs to the short-chain dehydrogenases/reductases (SDR) family. 17-beta-HSD 3 subfamily. Expressed in the testes.

The protein localises to the endoplasmic reticulum. The catalysed reaction is a 17beta-hydroxy steroid + NADP(+) = a 17-oxo steroid + NADPH + H(+). It carries out the reaction testosterone + NADP(+) = androst-4-ene-3,17-dione + NADPH + H(+). It catalyses the reaction 17beta-estradiol + NADP(+) = estrone + NADPH + H(+). The enzyme catalyses 3beta-hydroxyandrost-5-en-17-one + NADPH + H(+) = androst-5-en-3beta,17beta-diol + NADP(+). The catalysed reaction is 17beta-hydroxy-5alpha-androstan-3-one + NADP(+) = 5alpha-androstan-3,17-dione + NADPH + H(+). It carries out the reaction androsterone + NADPH + H(+) = 5alpha-androstane-3alpha,17beta-diol + NADP(+). It catalyses the reaction 3beta-hydroxy-5alpha-androstan-17-one + NADPH + H(+) = 5alpha-androstane-3beta,17beta-diol + NADP(+). The enzyme catalyses androst-4-ene-3,11,17-trione + NADPH + H(+) = 17beta-hydroxyandrost-4-ene-3,11-dione + NADP(+). The catalysed reaction is 11beta-hydroxyandrost-4-ene-3,17-dione + NADPH + H(+) = 11beta,17beta-dihydroxyandrost-4-ene-3-one + NADP(+). Its pathway is hormone biosynthesis; testosterone biosynthesis. The protein operates within steroid metabolism. In terms of biological role, catalyzes the conversion of 17-oxosteroids to 17beta-hydroxysteroids. Favors the reduction of androstenedione to testosterone. Testosterone is the key androgen driving male development and function. Uses NADPH while the two other EDH17B enzymes use NADH. Androgens such as epiandrosterone, dehydroepiandrosterone, androsterone and androstanedione are accepted as substrates and reduced at C-17. Can reduce 11-ketoandrostenedione as well as 11beta-hydroxyandrostenedione at C-17 to the respective testosterone forms. Plays a role in the rate-limiting-step for the maximum level of testosterone production by the testis but does not affect basal testosterone production. This Mus musculus (Mouse) protein is 17-beta-hydroxysteroid dehydrogenase type 3.